The chain runs to 215 residues: Nuclear autoantigen Sp-100 (215 aa).

The SAND domain occupies 1 to 31; it reads EGDRGASKNWKLSIRCGGYTLKVLTENKFLP. 2 consecutive DNA-binding regions (HMG box) follow at residues 32-108 and 124-192; these read EPPS…KTYI and PKRP…AACR. The Nuclear localization signal signature appears at 72 to 89; sequence KKRSEMWKTIFAKEKGKF. 2 disordered regions span residues 104–124 and 193–215; these read MKTY…PNAP and AKGK…KKKE.

In terms of assembly, homodimer. Interacts with members of the HP1 family of nonhistone chromosomal protein, such as CBX5 and CBX3 via the PxVxL motif. Interacts with ETS1; the interaction is direct and modulates ETS1 transcriptional activity. Interacts with the MRN complex which is composed of two heterodimers RAD50/MRE11 associated with a single NBN; recruits the complex to PML-related bodies. Interacts with HIPK2; positively regulates TP53-dependent transcription. Interacts with CASP8AP2; may negatively regulate CASP8AP2 export from the nucleus to the cytoplasm. Post-translationally, phosphorylated. Sumoylated. Sumoylated with SUMO1. Sumoylation depends on a functional nuclear localization signal but is not necessary for nuclear import or nuclear body targeting. Sumoylation may stabilize the interaction with CBX5.

The protein resides in the nucleus. Its subcellular location is the PML body. The protein localises to the nuclear body. It localises to the cytoplasm. Together with PML, this tumor suppressor is a major constituent of the PML bodies, a subnuclear organelle involved in a large number of physiological processes including cell growth, differentiation and apoptosis. Functions as a transcriptional coactivator of ETS1 and ETS2. Under certain conditions, it may also act as a corepressor of ETS1 preventing its binding to DNA. Through the regulation of ETS1 it may play a role in angiogenesis, controlling endothelial cell motility and invasion. Through interaction with the MRN complex it may be involved in the regulation of telomeres lengthening. May also regulate TP53-mediated transcription and through CASP8AP2, regulate FAS-mediated apoptosis. May also play a role in infection by viruses through mechanisms that may involve chromatin and/or transcriptional regulation. This is Nuclear autoantigen Sp-100 (SP100) from Pan troglodytes (Chimpanzee).